The primary structure comprises 72 residues: Putative snRNP Sm-like protein (72 aa).

The region spanning 4–72 (RPLDILNNAL…RGDNVVYVSP (69 aa)) is the Sm domain.

It belongs to the snRNP Sm proteins family.

The protein is Putative snRNP Sm-like protein of Methanosarcina barkeri (strain Fusaro / DSM 804).